The primary structure comprises 88 residues: UPF0250 protein Sama_2593 (88 aa).

This sequence belongs to the UPF0250 family.

This is UPF0250 protein Sama_2593 from Shewanella amazonensis (strain ATCC BAA-1098 / SB2B).